The chain runs to 299 residues: Taste receptor type 2 member 50 (299 aa).

Methionine 1 is a topological domain (extracellular). A helical transmembrane segment spans residues 2-22 (VTFLHIFFSILILVLFVLGNF). Residues 23-55 (ANGFIALVNFIDLVKRKKISSADQILTALAVSR) are Cytoplasmic-facing. A helical transmembrane segment spans residues 56 to 76 (IGLLWALLLNWYLTVLNPAFY). Residues 77–87 (SVELRITSYNA) are Extracellular-facing. The helical transmembrane segment at 88-108 (WVVTNHFSMWLAASLSIFYLL) threads the bilayer. Over 109 to 126 (KIANFSNLIFLHLKRRVR) the chain is Cytoplasmic. The helical transmembrane segment at 127–147 (SVILVILLGPLTFLVCHLFVA) threads the bilayer. Residues 148-181 (NMDESMSAEEYEGNMTGKLKLRNTVHLSYLTVTT) are Extracellular-facing. An N-linked (GlcNAc...) asparagine glycan is attached at asparagine 161. Residues 182–202 (LWSFIPFTLSLISFLMLICSL) traverse the membrane as a helical segment. Residues 203 to 229 (CKHVKKMQLHGEGSQDLSTKVHIKALQ) lie on the Cytoplasmic side of the membrane. Residues 230-250 (TLISFLLLCAIFFLFLIISIW) traverse the membrane as a helical segment. At 251–259 (NPRRLQNDP) the chain is on the extracellular side. A helical membrane pass occupies residues 260 to 280 (VVVVSKAVGNIYLALDSFILI). At 281 to 299 (WRTKKLKHTFLLILCQIRC) the chain is on the cytoplasmic side.

This sequence belongs to the G-protein coupled receptor T2R family.

Its subcellular location is the membrane. In terms of biological role, receptor that may play a role in the perception of bitterness and is gustducin-linked. May play a role in sensing the chemical composition of the gastrointestinal content. The activity of this receptor may stimulate alpha gustducin, mediate PLC-beta-2 activation and lead to the gating of TRPM5. In Pongo pygmaeus (Bornean orangutan), this protein is Taste receptor type 2 member 50 (TAS2R50).